A 209-amino-acid chain; its full sequence is GTP-binding protein RHB1 (209 aa).

An N-acetylmethionine modification is found at M1. The GTP site is built by G28, K29, T30, T31, V42, Y45, T48, D132, and A172. T30 lines the Mg(2+) pocket. Residues 45–53 (YYPTIENEF) carry the Effector region motif. T48 serves as a coordination point for Mg(2+). C206 is subject to Cysteine methyl ester. The S-farnesyl cysteine moiety is linked to residue C206. Residues 207–209 (SIM) constitute a propeptide, removed in mature form.

It belongs to the small GTPase superfamily. Rheb family. In terms of assembly, interacts with BTN2.

It is found in the cell membrane. The catalysed reaction is GTP + H2O = GDP + phosphate + H(+). In terms of biological role, binds GTP and exhibits intrinsic GTPase activity. Involved in the regulation of arginine and lysine uptake. Acts through the CAN1 permease. The polypeptide is GTP-binding protein RHB1 (RHB1) (Saccharomyces cerevisiae (strain ATCC 204508 / S288c) (Baker's yeast)).